A 1010-amino-acid polypeptide reads, in one-letter code: MGSRLKQNPDTTFEVYIEVNRPGSTDEDPELQRIFPEDFSDQEVLQTVTKFCFPFSLDSLTSSHVGQNFTFVLTDIDSKQRFGFCRLSSGAKSCFCILSYLPWFEAFYKLLNILAEYSSKNQDSQRNELLKTLHGHPIPEPGTPMHLSVHSHFTVPDSQELPSIPENRNLTEYFVAVDVNNMLHLYASMLYERRILICCSKLSTLTACIHGSSAMLFPMYWQHVYIPVLPPHLLDYCCAPMPYLIGIHSSLMEKVKGMSLDDVVFLNVDTNTLETPFDDLQNLPNEVVSALKNRIRKMSTTTGDGVARAFLKAQASLFGSYRNALKIEPEEPITFCEETFVSHRSSGLRPFLQNAIQLQLFKQFIDGRLDLLNSGNGFSDVFEEEINMGEYAGSDKLYHQWLSTVKKGSGAFINTMKTRANPAMKTVYKFAKDHAKMGIKEVKNRLKQKDMAENGFSTATEEPLPQISPSSIEKKRGEERRPITVHFGQVRPPRPHVPRRPKSNAVVESRTTAGSSPDQPQQYRTLKESDADGDEAISPEKDSSEATVKEPQSTEVKHVSLLEDIFSNLQTEPPLLSQAKSLEDLRTPKEDHENQFTFDYQRMDLTAQERTRTIPAMKHGHPYNKLWSMGHDDMAIPNKYLQISPERHLTLPSNSTVTPHKDSALTNIEKEVTIASSQGNITIPRPHGRKTPELGIVPPPPAPRGIKLQTAMTDANKQQTGDSSNYHGQITEGSLRELSADNGEKETAGSSTSEILKPVKVSTEVGMNDDDLLSLLDPLKAGRYQTASQPPMGTLPHSFETPCCSSTPLLTSLQSDFVSPAFSHQLGFAPQPAFLHSPLNPFAQALAAEKTASVMGPPMGVFKAPVATALGSHSFLPTPGIYHSPRPLTSALQGSNLFGQISSGTPLNPVIRQSHSLSETQSNMPLMTSIPAGHRTLPMVQSRSKHQDGKPREYPPIPPRPAKLLEPALLPTKSDQPIDPFEDLLNKTKQTVTPASGKVEHLRKQWETFE.

A uDENN domain is found at 13-143; that stretch reads FEVYIEVNRP…HGHPIPEPGT (131 aa). Residues 160-296 enclose the cDENN domain; it reads ELPSIPENRN…VVSALKNRIR (137 aa). A dDENN domain is found at 298–375; the sequence is MSTTTGDGVA…DGRLDLLNSG (78 aa). Residues 378 to 382 carry the FXDXF motif motif; the sequence is FSDVF. The segment at 455–554 is disordered; it reads GFSTATEEPL…EATVKEPQST (100 aa). Basic and acidic residues predominate over residues 472-482; it reads IEKKRGEERRP. A compositionally biased stretch (basic residues) spans 493–502; the sequence is PRPHVPRRPK. The segment covering 509-524 has biased composition (polar residues); the sequence is SRTTAGSSPDQPQQYR. Basic and acidic residues predominate over residues 538 to 548; that stretch reads SPEKDSSEATV. The Clathrin box signature appears at 560–569; it reads SLLEDIFSNL.

The protein localises to the cytoplasmic vesicle. Its subcellular location is the clathrin-coated vesicle membrane. It localises to the presynaptic cell membrane. Functionally, guanine nucleotide exchange factor (GEF) regulating clathrin-mediated endocytosis through RAB35 activation. Promotes the exchange of GDP to GTP, converting inactive GDP-bound RAB35 into its active GTP-bound form. Regulates clathrin-mediated endocytosis of synaptic vesicles and mediates exit from early endosomes. Binds phosphatidylinositol-phosphates (PtdInsPs), with some preference for PtdIns(3)P. The protein is DENN domain-containing protein 1A (dennd1a) of Xenopus laevis (African clawed frog).